Consider the following 314-residue polypeptide: Olfactory receptor 10T2 (314 aa).

Topologically, residues methionine 1–leucine 26 are extracellular. A glycan (N-linked (GlcNAc...) asparagine) is linked at asparagine 5. The chain crosses the membrane as a helical span at residues leucine 27–methionine 47. The Cytoplasmic portion of the chain corresponds to alanine 48 to threonine 55. Residues leucine 56–phenylalanine 76 traverse the membrane as a helical segment. Residues valine 77 to threonine 100 lie on the Extracellular side of the membrane. Cysteine 98 and cysteine 190 are disulfide-bonded. The chain crosses the membrane as a helical span at residues glutamine 101–tyrosine 121. Residues aspartate 122–arginine 140 are Cytoplasmic-facing. A helical transmembrane segment spans residues leucine 141–threonine 161. The Extracellular segment spans residues asparagine 162 to leucine 198. The helical transmembrane segment at alanine 199–serine 218 threads the bilayer. At tyrosine 219–alanine 237 the chain is on the cytoplasmic side. Residues phenylalanine 238–isoleucine 258 form a helical membrane-spanning segment. Over tyrosine 259–aspartate 271 the chain is Extracellular. Residues glutamine 272 to leucine 292 form a helical membrane-spanning segment. Over arginine 293–serine 314 the chain is Cytoplasmic.

This sequence belongs to the G-protein coupled receptor 1 family.

It localises to the cell membrane. In terms of biological role, odorant receptor. This is Olfactory receptor 10T2 (OR10T2) from Homo sapiens (Human).